Reading from the N-terminus, the 248-residue chain is MYKLVLIRHGESTWNKENRFTGWVDVDLTEQGNLEAQQAGTLLKDSGYMFDIAYTSVLKRAIRTLWHVQDKMDLMYLPVVHSWRLNERHYGALSGLNKAETAARFGDEQVLVWRRSYDTPPPALEPTDSRTSYDDPRYAKVPREELPLTECLKDTVARVMPIWNESIAPAIKSGRKVLIAAHGNSIRALVKYLDNISDSDIVGLNIPNGVPLVYELDENLKPIKHYYLGDQEAIAKAQAAVAKQGKAG.

Residues 8-15 (RHGESTWN), 21-22 (TG), R60, 87-90 (ERHY), K98, 114-115 (RR), and 183-184 (GN) contribute to the substrate site. The active-site Tele-phosphohistidine intermediate is the H9. E87 functions as the Proton donor/acceptor in the catalytic mechanism.

It belongs to the phosphoglycerate mutase family. BPG-dependent PGAM subfamily. Homodimer.

It catalyses the reaction (2R)-2-phosphoglycerate = (2R)-3-phosphoglycerate. It participates in carbohydrate degradation; glycolysis; pyruvate from D-glyceraldehyde 3-phosphate: step 3/5. In terms of biological role, catalyzes the interconversion of 2-phosphoglycerate and 3-phosphoglycerate. In Paraburkholderia phymatum (strain DSM 17167 / CIP 108236 / LMG 21445 / STM815) (Burkholderia phymatum), this protein is 2,3-bisphosphoglycerate-dependent phosphoglycerate mutase.